The sequence spans 216 residues: DNA repair and recombination protein RadB (216 aa).

Belongs to the eukaryotic RecA-like protein family. RadB subfamily.

Involved in DNA repair and in homologous recombination. May regulate the cleavage reactions of the branch-structured DNA. Has a very weak ATPase activity that is not stimulated by DNA. Binds DNA but does not promote DNA strands exchange. The chain is DNA repair and recombination protein RadB from Methanococcus maripaludis (strain C5 / ATCC BAA-1333).